Consider the following 769-residue polypeptide: DNA gyrase subunit B (769 aa).

In terms of domain architecture, Toprim spans serine 414–proline 528. Mg(2+) is bound by residues glutamate 420, aspartate 493, and aspartate 495.

It belongs to the type II topoisomerase GyrB family. As to quaternary structure, heterotetramer, composed of two GyrA and two GyrB chains. In the heterotetramer, GyrA contains the active site tyrosine that forms a transient covalent intermediate with DNA, while GyrB binds cofactors and catalyzes ATP hydrolysis. Mg(2+) serves as cofactor. Mn(2+) is required as a cofactor. It depends on Ca(2+) as a cofactor.

The protein localises to the cytoplasm. The catalysed reaction is ATP-dependent breakage, passage and rejoining of double-stranded DNA.. Functionally, a type II topoisomerase that negatively supercoils closed circular double-stranded (ds) DNA in an ATP-dependent manner to modulate DNA topology and maintain chromosomes in an underwound state. Negative supercoiling favors strand separation, and DNA replication, transcription, recombination and repair, all of which involve strand separation. Also able to catalyze the interconversion of other topological isomers of dsDNA rings, including catenanes and knotted rings. Type II topoisomerases break and join 2 DNA strands simultaneously in an ATP-dependent manner. In Campylobacter jejuni subsp. jejuni serotype O:2 (strain ATCC 700819 / NCTC 11168), this protein is DNA gyrase subunit B.